We begin with the raw amino-acid sequence, 403 residues long: DNA replication and repair protein RecF (403 aa).

Residue 30 to 37 (GSNGLGKT) participates in ATP binding.

It belongs to the RecF family.

It is found in the cytoplasm. In terms of biological role, the RecF protein is involved in DNA metabolism; it is required for DNA replication and normal SOS inducibility. RecF binds preferentially to single-stranded, linear DNA. It also seems to bind ATP. The chain is DNA replication and repair protein RecF from Bifidobacterium adolescentis (strain ATCC 15703 / DSM 20083 / NCTC 11814 / E194a).